The chain runs to 64 residues: uncharacterized protein (64 aa).

This is an uncharacterized protein from Dictyostelium discoideum (Social amoeba).